The sequence spans 225 residues: RNA-binding protein 24 (225 aa).

One can recognise an RRM domain in the interval threonine 11 to leucine 88.

It localises to the nucleus. The protein localises to the cytoplasm. In terms of biological role, multifunctional RNA-binding protein involved in the regulation of pre-mRNA splicing, mRNA stability and mRNA translation important for cell fate decision and differentiation. Plays a major role in pre-mRNA alternative splicing regulation. Mediates preferentially muscle-specific exon inclusion in numerous mRNAs important for striated cardiac and skeletal muscle cell differentiation. Binds to intronic splicing enhancer (ISE) composed of stretches of GU-rich motifs localized in flanking intron of exon that will be included by alternative splicing. Involved in embryonic stem cell (ESC) transition to cardiac cell differentiation by promoting pre-mRNA alternative splicing events of several pluripotency and/or differentiation genes. Plays a role in the regulation of mRNA stability and mRNA translation to which it is bound. Involved in myogenic differentiation by regulating MYOG levels. Binds to a huge amount of mRNAs. Involved in embryonic heart development and myogenic differentiation of somitic muscle progenitors. The protein is RNA-binding protein 24 of Gallus gallus (Chicken).